The primary structure comprises 81 residues: Putative defensin-like protein 31 (81 aa).

The signal sequence occupies residues 1 to 26 (MTSSSKCLFFVFLCLAALLTPYLAEA). 3 cysteine pairs are disulfide-bonded: Cys38–Cys58, Cys44–Cys70, and Cys48–Cys72.

The protein belongs to the DEFL family.

Its subcellular location is the secreted. The chain is Putative defensin-like protein 31 from Arabidopsis thaliana (Mouse-ear cress).